The sequence spans 504 residues: Glucose-6-phosphate isomerase (504 aa).

Catalysis depends on Glu333, which acts as the Proton donor. Residues His364 and Lys473 contribute to the active site.

This sequence belongs to the GPI family.

It is found in the cytoplasm. It catalyses the reaction alpha-D-glucose 6-phosphate = beta-D-fructose 6-phosphate. The protein operates within carbohydrate biosynthesis; gluconeogenesis. It participates in carbohydrate degradation; glycolysis; D-glyceraldehyde 3-phosphate and glycerone phosphate from D-glucose: step 2/4. In terms of biological role, catalyzes the reversible isomerization of glucose-6-phosphate to fructose-6-phosphate. The protein is Glucose-6-phosphate isomerase of Xanthomonas euvesicatoria pv. vesicatoria (strain 85-10) (Xanthomonas campestris pv. vesicatoria).